A 154-amino-acid polypeptide reads, in one-letter code: uncharacterized protein (154 aa).

A Phosphoserine modification is found at serine 47.

It to yeast YPL229w.

This is an uncharacterized protein from Saccharomyces cerevisiae (strain ATCC 204508 / S288c) (Baker's yeast).